The sequence spans 723 residues: Translation initiation factor IF-2 (723 aa).

Positions 112 to 138 (KIFNNKKNKKQKPQQAPQQEVQKKKEK) are disordered. A compositionally biased stretch (basic residues) spans 114 to 123 (FNNKKNKKQK). A tr-type G domain is found at 224–393 (ERPPVVTIMG…LLVSEMEELK (170 aa)). The G1 stretch occupies residues 233–240 (GHVDHGKT). GTP is bound at residue 233-240 (GHVDHGKT). The segment at 258-262 (GITQH) is G2. The tract at residues 279 to 282 (DTPG) is G3. GTP contacts are provided by residues 279-283 (DTPGH) and 333-336 (NKID). Residues 333 to 336 (NKID) are G4. The tract at residues 369 to 371 (SAL) is G5.

This sequence belongs to the TRAFAC class translation factor GTPase superfamily. Classic translation factor GTPase family. IF-2 subfamily.

It localises to the cytoplasm. One of the essential components for the initiation of protein synthesis. Protects formylmethionyl-tRNA from spontaneous hydrolysis and promotes its binding to the 30S ribosomal subunits. Also involved in the hydrolysis of GTP during the formation of the 70S ribosomal complex. The protein is Translation initiation factor IF-2 of Anoxybacillus flavithermus (strain DSM 21510 / WK1).